The primary structure comprises 1297 residues: DNA-directed RNA polymerase subunit beta'' (1297 aa).

Zn(2+)-binding residues include cysteine 220, cysteine 293, cysteine 300, and cysteine 303. The span at arginine 1278–lysine 1288 shows a compositional bias: basic residues. The disordered stretch occupies residues arginine 1278 to lysine 1297.

The protein belongs to the RNA polymerase beta' chain family. RpoC2 subfamily. In terms of assembly, in plastids the minimal PEP RNA polymerase catalytic core is composed of four subunits: alpha, beta, beta', and beta''. When a (nuclear-encoded) sigma factor is associated with the core the holoenzyme is formed, which can initiate transcription. Requires Zn(2+) as cofactor.

The protein resides in the plastid. It localises to the chloroplast. The enzyme catalyses RNA(n) + a ribonucleoside 5'-triphosphate = RNA(n+1) + diphosphate. Functionally, DNA-dependent RNA polymerase catalyzes the transcription of DNA into RNA using the four ribonucleoside triphosphates as substrates. The chain is DNA-directed RNA polymerase subunit beta'' from Welwitschia mirabilis (Tree tumbo).